Here is a 217-residue protein sequence, read N- to C-terminus: Adapter protein MecA (217 aa).

The protein belongs to the MecA family. Homodimer.

Its function is as follows. Enables the recognition and targeting of unfolded and aggregated proteins to the ClpC protease or to other proteins involved in proteolysis. The polypeptide is Adapter protein MecA (Listeria monocytogenes serotype 4b (strain CLIP80459)).